The primary structure comprises 595 residues: MKTILLFALSLLLSLSVSDVCAQERVYDISQFGLKANSKKNASPVVRKAIAKIKAECRDGEKVILRFPAGRYNFHEAGSTVREYYISNHDQDNPKKVGIALEDMKNLTIDGQGSEFVFYGRMIPVSLLRSENCVLKNFSIDFEQPHIAQVQVVENDPEKGITFEPAPWVDYRISKDSVFEGLGEGWVMRYSWGIAFDGKTKHVVYNTSDIGCPTKGAFEVAPRRICSPKWKDARLVPGTVVAMRGWGRPTPGIFMSHDVNTSLLDVKVHYAEGMGLLAQLCEDITLDGFGVCLKGNNDPRYFTTQADATHFSGCKGKIVSKNGLYEGMMDDAINVHGTYLKVIKRVDDHTLIGRYMHDQSWGFEWGRPGDDVQFVRSETMELIGKQNQITAIRPYDKGEIQGAREFSITFKEAIDPAINEKSGFGIENLTWTPEVLFAGNTIRNNRARGTLFSTPKKTVVEDNLFDHTSGTAILLCGDCNGWFETGACRDVTIRRNRFINALTNMFQFTNAVISIYPEIPNLKDQQKYFHGGKDGGIVIEDNEFDTFDAPILYAKSVDGLIFRNNVIKTNTEFKPFHWNKDRFLLERVTNVKISE.

Residues 1–22 form the signal peptide; sequence MKTILLFALSLLLSLSVSDVCA. PbH1 repeat units lie at residues 432–454, 455–477, and 488–541; these read TPEV…LFST, PKKT…LLCG, and CRDV…VIED.

This sequence belongs to the glycosyl hydrolase 110 family. B subfamily.

It carries out the reaction Hydrolysis of terminal, non-reducing branched (1-&gt;3)-alpha-D-galactosidic residues, producing free D-galactose.. The enzyme catalyses Hydrolysis of terminal, non-reducing linear (1-&gt;3)-alpha-D-galactosidic residues, producing free D-galactose.. The catalysed reaction is Hydrolysis of terminal, non-reducing alpha-D-galactose residues in alpha-D-galactosides, including galactose oligosaccharides, galactomannans and galactolipids.. Its function is as follows. Alpha-galactosidase. Removes both branched alpha-1,3-linked galactose residues of blood group B antigens and linear alpha-1,3-linked galactose structures. The protein is Alpha-1,3-galactosidase B (glaB) of Bacteroides fragilis (strain YCH46).